We begin with the raw amino-acid sequence, 124 residues long: Fluoride-specific ion channel FluC (124 aa).

4 consecutive transmembrane segments (helical) span residues 4-24 (IVLL…LAGL), 35-55 (LGTF…WGVC), 67-87 (VVLL…TFES), and 96-116 (WLAF…LLWL). Na(+) contacts are provided by G75 and T78.

Belongs to the fluoride channel Fluc/FEX (TC 1.A.43) family.

It localises to the cell inner membrane. The enzyme catalyses fluoride(in) = fluoride(out). Its activity is regulated as follows. Na(+) is not transported, but it plays an essential structural role and its presence is essential for fluoride channel function. In terms of biological role, fluoride-specific ion channel. Important for reducing fluoride concentration in the cell, thus reducing its toxicity. This chain is Fluoride-specific ion channel FluC, found in Nitratidesulfovibrio vulgaris (strain DSM 19637 / Miyazaki F) (Desulfovibrio vulgaris).